The primary structure comprises 187 residues: Cytochrome b-245 chaperone 1 (187 aa).

The chain crosses the membrane as a helical span at residues Gly-20 to Gly-42. The disordered stretch occupies residues Glu-167–Ser-187. Phosphoserine occurs at positions 168 and 170.

The protein belongs to the CYBC1 family. In terms of assembly, interacts with CYBB; CYBC1 may act as a chaperone stabilizing Cytochrome b-245 heterodimer.

The protein resides in the endoplasmic reticulum membrane. Functions as a chaperone necessary for a stable expression of the CYBA and CYBB subunits of the cytochrome b-245 heterodimer. Controls the phagocyte respiratory burst and is essential for innate immunity. The sequence is that of Cytochrome b-245 chaperone 1 from Mus musculus (Mouse).